The chain runs to 804 residues: MRALWVLGLCCVLLTFGSVRADDEVDVDGTVEEDLGKSREGSRTDDEVVQREEEAIQLDGLNASQIRELREKSEKFAFQAEVNRMMKLIINSLYKNKEIFLRELISNASDALDKIRLISLTDENALSGNEELTVKIKCDKEKNLLHVTDTGVGMTREELVKNLGTIAKSGTSEFLNKMTEAQEDGQSTSELIGQFGVGFYSAFLVADKVIVTSKHNNDTQHIWESDSNEFSVIADPRGNTLGRGTTITLVLKEEASDYLELDTIKNLVKKYSQFINFPIYVWSSKTETVEEPMEEEEAAKEEKEESDDEAAVEEEEEEKKPKTKKVEKTVWDWELMNDIKPIWQRPSKEVEEDEYKAFYKSFSKESDDPMAYIHFTAEGEVTFKSILFVPTSAPRGLFDEYGSKKSDYIKLYVRRVFITDDFHDMMPKYLNFVKGVVDSDDLPLNVSRETLQQHKLLKVIRKKLVRKTLDMIKKIADDKYNDTFWKEFGTNIKLGVIEDHSNRTRLAKLLRFQSSHHPTDITSLDQYVERMKEKQDKIYFMAGSSRKEAESSPFVERLLKKGYEVIYLTEPVDEYCIQALPEFDGKRFQNVAKEGVKFDESEKTKESREAVEKEFEPLLNWMKDKALKDKIEKAVVSQRLTESPCALVASQYGWSGNMERIMKAQAYQTGKDISTNYYASQKKTFEINPRHPLIRDMLRRIKEDEDDKTVLDLAVVLFETATLRSGYLLPDTKAYGDRIERMLRLSLNIDPDAKVEDEPEEEPEETTEDTTEDTEQDEDEEMDVGTDEEEQETAKESTAEKDEL.

Positions 1–21 are cleaved as a signal peptide; sequence MRALWVLGLCCVLLTFGSVRA. The short motif at 42 to 44 is the SRT pseudosubstrate motif element; it reads SRT. Asn-62 carries an N-linked (GlcNAc...) asparagine glycan. Position 64 is a phosphoserine (Ser-64). Residue Asn-107 is glycosylated (N-linked (GlcNAc...) asparagine). Residues Asn-107, Asp-149, and Asn-162 each contribute to the ATP site. An N6-(2-hydroxyisobutyryl)lysine modification is found at Lys-168. Ser-172 is subject to Phosphoserine. Residue Phe-199 coordinates ATP. Residue Asn-217 is glycosylated (N-linked (GlcNAc...) asparagine). The interval 288-323 is disordered; it reads TVEEPMEEEEAAKEEKEESDDEAAVEEEEEEKKPKT. Acidic residues predominate over residues 289 to 317; the sequence is VEEPMEEEEAAKEEKEESDDEAAVEEEEE. A phosphoserine mark is found at Ser-306 and Ser-403. Lys-404 carries the N6-succinyllysine modification. N-linked (GlcNAc...) asparagine glycosylation is present at Asn-445. Position 447 is a phosphoserine (Ser-447). Residue Lys-479 is modified to N6-acetyllysine. 2 N-linked (GlcNAc...) asparagine glycosylation sites follow: Asn-481 and Asn-502. An N6-succinyllysine modification is found at Lys-633. A disordered region spans residues 750–804; the sequence is DPDAKVEDEPEEEPEETTEDTTEDTEQDEDEEMDVGTDEEEQETAKESTAEKDEL. Acidic residues predominate over residues 757-791; sequence DEPEEEPEETTEDTTEDTEQDEDEEMDVGTDEEEQ. Thr-786 is subject to Phosphothreonine. A compositionally biased stretch (basic and acidic residues) spans 792-804; the sequence is ETAKESTAEKDEL. The Prevents secretion from ER motif lies at 801–804; it reads KDEL.

Belongs to the heat shock protein 90 family. Homodimer; disulfide-linked. Component of an EIF2 complex at least composed of CELF1/CUGBP1, CALR, CALR3, EIF2S1, EIF2S2, HSP90B1 and HSPA5. Part of a large chaperone multiprotein complex comprising DNAJB11, HSP90B1, HSPA5, HYOU, PDIA2, PDIA4, PDIA6, PPIB, SDF2L1, UGGT1 and very small amounts of ERP29, but not, or at very low levels, CALR nor CANX. Interacts with AIMP1; regulates its retention in the endoplasmic reticulum. Hyperglycosylated form interacts with OS9; promoting its degradation by the endoplasmic reticulum associated degradation (ERAD). Interacts with CNPY3. This interaction is disrupted in the presence of ATP. Interacts with TLR4 and TLR9, but not with TLR3. Interacts with MZB1 in a calcium-dependent manner. Interacts with METTL23. Interacts with IL1B; the interaction facilitates cargo translocation into the ERGIC. Interacts with EIF2AK3. Phosphorylated by CK2. Post-translationally, N-glycosylated cotranslationally at Asn-217 by STT3A-containing OST-A complex: this glycosylation is constitutive. In response to various stress, 5 additional facultative sites (Asn-62, Asn-107, Asn-445, Asn-481 and Asn-502) can be glycosylated post-translationally by STT3B-containing OST-B complex, leading to a hyperglycosylated form that is degraded by the ER-associated degradation (ERAD) pathway. In normal conditions, the OST-A complex together with CCDC134 prevent glycosylation at facultative sites during protein folding, thereby preventing hyperglycosylation. Mechanistically, nascent HSP90B1 is tethered during translation to a specialized CCDC134-containing translocon that forms a microenvironment for its folding, in which STT3A associates with the SRT pseudosubstrate motif, and prevents access to facultative glycosylation sites until folding is completed, rendering its facultative sites inaccessible to the OST-B complex.

The protein localises to the endoplasmic reticulum lumen. Its subcellular location is the sarcoplasmic reticulum lumen. It localises to the melanosome. The enzyme catalyses ATP + H2O = ADP + phosphate + H(+). Functionally, ATP-dependent chaperone involved in the processing of proteins in the endoplasmic reticulum, regulating their transport. Together with MESD, acts as a modulator of the Wnt pathway by promoting the folding of LRP6, a coreceptor of the canonical Wnt pathway. When associated with CNPY3, required for proper folding of Toll-like receptors. Promotes folding and trafficking of TLR4 to the cell surface. May participate in the unfolding of cytosolic leaderless cargos (lacking the secretion signal sequence) such as the interleukin 1/IL-1 to facilitate their translocation into the ERGIC (endoplasmic reticulum-Golgi intermediate compartment) and secretion; the translocation process is mediated by the cargo receptor TMED10. This Macaca fascicularis (Crab-eating macaque) protein is Endoplasmin (HSP90B1).